A 510-amino-acid polypeptide reads, in one-letter code: RNA-splicing ligase RtcB homolog (510 aa).

Mn(2+)-binding residues include D124, C127, H232, H264, and H358. 231–235 contributes to the GMP binding site; that stretch reads NHYAE. Residues 358–359, 407–410, S414, 433–436, and K509 each bind GMP; these read HN, GGTM, and HGAG. Residue H433 is the GMP-histidine intermediate of the active site.

The protein belongs to the RtcB family. Catalytic component of the tRNA-splicing ligase complex. It depends on Mn(2+) as a cofactor.

It carries out the reaction a 3'-end 3'-phospho-ribonucleotide-RNA + a 5'-end dephospho-ribonucleoside-RNA + GTP = a ribonucleotidyl-ribonucleotide-RNA + GMP + diphosphate. The enzyme catalyses a 3'-end 2',3'-cyclophospho-ribonucleotide-RNA + a 5'-end dephospho-ribonucleoside-RNA + GTP + H2O = a ribonucleotidyl-ribonucleotide-RNA + GMP + diphosphate + H(+). Catalytic subunit of the tRNA-splicing ligase complex that acts by directly joining spliced tRNA halves to mature-sized tRNAs by incorporating the precursor-derived splice junction phosphate into the mature tRNA as a canonical 3',5'-phosphodiester. May act as an RNA ligase with broad substrate specificity, and may function toward other RNAs. The chain is RNA-splicing ligase RtcB homolog from Trichoplax adhaerens (Trichoplax reptans).